The sequence spans 200 residues: Protein Syd (200 aa).

This sequence belongs to the Syd family.

It localises to the cell inner membrane. In terms of biological role, interacts with the SecY protein in vivo. May bind preferentially to an uncomplexed state of SecY, thus functioning either as a chelating agent for excess SecY in the cell or as a regulatory factor that negatively controls the translocase function. The sequence is that of Protein Syd from Colwellia psychrerythraea (strain 34H / ATCC BAA-681) (Vibrio psychroerythus).